The sequence spans 468 residues: Neuronal acetylcholine receptor subunit alpha-5 (468 aa).

Positions 1-22 (MAARGSGPRALRLLLLVQLVAG) are cleaved as a signal peptide. At 23-254 (RCGLAGAAGG…VIKRLPLFYT (232 aa)) the chain is on the extracellular side. Residues Asn155, Asn183, and Asn229 are each glycosylated (N-linked (GlcNAc...) asparagine). A disulfide bridge connects residues Cys170 and Cys184. Cysteines 234 and 235 form a disulfide. Transmembrane regions (helical) follow at residues 255–275 (LFLI…FYLP), 282–302 (ICLC…IEEI), and 317–337 (LVFT…AINI). The Cytoplasmic segment spans residues 338–429 (HHRSSSTHNA…WKFIAQVLDR (92 aa)). Residues 430-451 (MFLWTFLFVSIVGSLGLFVPVI) form a helical membrane-spanning segment. At 452 to 468 (YKWANILIPVHIGNANK) the chain is on the extracellular side.

It belongs to the ligand-gated ion channel (TC 1.A.9) family. Acetylcholine receptor (TC 1.A.9.1) subfamily. Alpha-5/CHRNA5 sub-subfamily. As to quaternary structure, neuronal AChR that forms heteropentamers composed of two different type of subunits: alpha and non-alpha (beta). CHRNA5/alpha-5 subunit is only able to form functional nAChRs when co-assembled with another alpha subunit, can be combined to CHRNA4/alpha-4 or CHRNA3/alpha-3 and CHRNB4/beta-4 or CHRNB2/beta-2 to give rise to functional receptors. Interacts with LYPD6.

It localises to the synaptic cell membrane. The protein localises to the cell membrane. The catalysed reaction is Ca(2+)(in) = Ca(2+)(out). It catalyses the reaction K(+)(in) = K(+)(out). The enzyme catalyses Na(+)(in) = Na(+)(out). Activated by a myriad of ligands such as acetylcholine, cytisine, nicotine, choline and epibatidine. In terms of biological role, component of neuronal acetylcholine receptors (nAChRs) that function as pentameric, ligand-gated cation channels with high calcium permeability among other activities. nAChRs are excitatory neurotrasnmitter receptors formed by a collection of nAChR subunits known to mediate synaptic transmission in the nervous system and the neuromuscular junction. Each nAchR subunit confers differential attributes to channel properties, including activation, deactivation and desensitization kinetics, pH sensitivity, cation permeability, and binding to allosteric modulators. Has an accessory rather than functional role and is only able to form functional nAChRs when co-assembled with another beta subunit. Participates in pentameric assemblies along with CHRNA3, CHRNA4, CHRNB2 and CHRNB4. Increases receptor sensitivity to acetylcholine and nicotine when associated with CHRNA4 and CHRNB2. Plays a role in nicotine addiction. The polypeptide is Neuronal acetylcholine receptor subunit alpha-5 (Homo sapiens (Human)).